Here is a 293-residue protein sequence, read N- to C-terminus: MTHDYIVRGLAYGGEIRAYAAITTESVQEAQTRHYTWPTASAAMGRTMTATVMMGAMLKGNQKLTVTVDGKGPIGRIIADADAQGNVRAYVDHPQTHFPLNDQGKLDVRRAVGTDGSIQVVKDVGMKDYFSGASPIVSGELGDDFTYYYATSEQTPSSVGLGVLVNPDNSIKAAGGFIIQVMPGATDETVTKLEEAISQMQPVSKLIEQGLTPEGILNEILGEGNVQILNSTSAQFECNCSHEKFLNAIKGLGEAEIHSMIKEDHGAEAVCHFCGNKYQYSESELEDLLETMK.

Cystine bridges form between Cys-238–Cys-240 and Cys-271–Cys-274.

It belongs to the HSP33 family. Under oxidizing conditions two disulfide bonds are formed involving the reactive cysteines. Under reducing conditions zinc is bound to the reactive cysteines and the protein is inactive.

The protein localises to the cytoplasm. In terms of biological role, redox regulated molecular chaperone. Protects both thermally unfolding and oxidatively damaged proteins from irreversible aggregation. Plays an important role in the bacterial defense system toward oxidative stress. The protein is 33 kDa chaperonin of Staphylococcus epidermidis (strain ATCC 35984 / DSM 28319 / BCRC 17069 / CCUG 31568 / BM 3577 / RP62A).